A 452-amino-acid polypeptide reads, in one-letter code: tRNA modification GTPase MnmE (452 aa).

(6S)-5-formyl-5,6,7,8-tetrahydrofolate is bound by residues Arg-21, Glu-78, and Lys-118. A TrmE-type G domain is found at 214–375; the sequence is GMKVVIAGRP…LREHLKKSMG (162 aa). Asn-224 contacts K(+). GTP is bound by residues 224-229, 243-249, and 268-271; these read NAGKSS, TNIAGTT, and DTAG. Mg(2+) is bound at residue Ser-228. 3 residues coordinate K(+): Thr-243, Ile-245, and Thr-248. Position 249 (Thr-249) interacts with Mg(2+). Residue Lys-452 coordinates (6S)-5-formyl-5,6,7,8-tetrahydrofolate.

The protein belongs to the TRAFAC class TrmE-Era-EngA-EngB-Septin-like GTPase superfamily. TrmE GTPase family. In terms of assembly, homodimer. Heterotetramer of two MnmE and two MnmG subunits. K(+) serves as cofactor.

It is found in the cytoplasm. In terms of biological role, exhibits a very high intrinsic GTPase hydrolysis rate. Involved in the addition of a carboxymethylaminomethyl (cmnm) group at the wobble position (U34) of certain tRNAs, forming tRNA-cmnm(5)s(2)U34. This chain is tRNA modification GTPase MnmE, found in Actinobacillus pleuropneumoniae serotype 5b (strain L20).